The following is a 173-amino-acid chain: Photosystem I assembly protein Ycf3 (173 aa).

TPR repeat units lie at residues 35–68 (AFSY…EIDP), 72–105 (SYIL…NPSL), and 120–153 (GEQA…APNS).

This sequence belongs to the Ycf3 family.

It is found in the plastid. It localises to the chloroplast thylakoid membrane. Essential for the assembly of the photosystem I (PSI) complex. May act as a chaperone-like factor to guide the assembly of the PSI subunits. The protein is Photosystem I assembly protein Ycf3 of Mesostigma viride (Green alga).